The chain runs to 245 residues: 8-amino-3,8-dideoxy-manno-octulosonate cytidylyltransferase (245 aa).

The protein belongs to the KdsB family.

Its subcellular location is the cytoplasm. It carries out the reaction 8-amino-3,8-dideoxy-alpha-D-manno-octulosonate + CTP = CMP-8-amino-3,8-dideoxy-alpha-D-manno-oct-2-ulosonate + diphosphate. Its pathway is bacterial outer membrane biogenesis; lipopolysaccharide biosynthesis. Its function is as follows. Activates KDO8N (a required 8-carbon sugar) for incorporation into bacterial lipopolysaccharide in the Shewanella genus. The chain is 8-amino-3,8-dideoxy-manno-octulosonate cytidylyltransferase from Shewanella pealeana (strain ATCC 700345 / ANG-SQ1).